The sequence spans 122 residues: Large ribosomal subunit protein bL20 (122 aa).

It belongs to the bacterial ribosomal protein bL20 family.

In terms of biological role, binds directly to 23S ribosomal RNA and is necessary for the in vitro assembly process of the 50S ribosomal subunit. It is not involved in the protein synthesizing functions of that subunit. The protein is Large ribosomal subunit protein bL20 (rplT) of Treponema pallidum (strain Nichols).